Here is a 496-residue protein sequence, read N- to C-terminus: Angiopoietin-2 (496 aa).

The N-terminal stretch at 1 to 18 is a signal peptide; the sequence is MWQLVFLTLSCDLAVATA. Residues N90, N120, N134, N152, N241, and N304 are each glycosylated (N-linked (GlcNAc...) asparagine). Residues 167–249 are a coiled coil; the sequence is STNKLEKQIL…VNNSVLQKQQ (83 aa). One can recognise a Fibrinogen C-terminal domain in the interval 275–495; that stretch reads KDEQIIFRDC…ATTMMIRPAD (221 aa). C284 and C313 are disulfide-bonded. The Ca(2+) site is built by D429, D431, C433, and C435. 2 disulfide bridges follow: C433–C435 and C437–C450.

In terms of assembly, interacts with TEK/TIE2, competing for the same binding site as ANGPT1. Interacts with ITGA5. Interacts with SVEP1/polydom. Interacts with THBD; this interaction significantly inhibits the generation of activated PC and TAFIa/CPB2 by the thrombin/thrombomodulin complex.

It localises to the secreted. In terms of biological role, binds to TEK/TIE2, competing for the ANGPT1 binding site, and modulating ANGPT1 signaling. Can induce tyrosine phosphorylation of TEK/TIE2 in the absence of ANGPT1. In the absence of angiogenic inducers, such as VEGF, ANGPT2-mediated loosening of cell-matrix contacts may induce endothelial cell apoptosis with consequent vascular regression. In concert with VEGF, it may facilitate endothelial cell migration and proliferation, thus serving as a permissive angiogenic signal. Involved in the regulation of lymphangiogenesis. This Bos taurus (Bovine) protein is Angiopoietin-2 (ANGPT2).